The sequence spans 324 residues: Homocysteine S-methyltransferase 1 (324 aa).

The 315-residue stretch at isoleucine 6–valine 320 folds into the Hcy-binding domain. Residues cysteine 238, cysteine 305, and cysteine 306 each contribute to the Zn(2+) site.

The cofactor is Zn(2+).

Its subcellular location is the cytoplasm. It catalyses the reaction S-methyl-L-methionine + L-homocysteine = 2 L-methionine + H(+). Functionally, homocysteine S-methyltransferase involved in the conversion of S-adenosylmethionine (AdoMet) to methionine to control the methionine/AdoMet ratio. Also converts S-methylmethionine (SMM) to methionine. This Saccharomyces cerevisiae (strain ATCC 204508 / S288c) (Baker's yeast) protein is Homocysteine S-methyltransferase 1 (MHT1).